The following is a 281-amino-acid chain: Pantothenate synthetase (281 aa).

29–36 is an ATP binding site; that stretch reads MGYLHEGH. H36 acts as the Proton donor in catalysis. Position 60 (Q60) interacts with (R)-pantoate. Q60 contributes to the beta-alanine binding site. Residue 146 to 149 participates in ATP binding; sequence GQKD. Q152 provides a ligand contact to (R)-pantoate. Residues V175 and 183–186 contribute to the ATP site; that span reads MSSR.

Belongs to the pantothenate synthetase family. As to quaternary structure, homodimer.

Its subcellular location is the cytoplasm. The enzyme catalyses (R)-pantoate + beta-alanine + ATP = (R)-pantothenate + AMP + diphosphate + H(+). It participates in cofactor biosynthesis; (R)-pantothenate biosynthesis; (R)-pantothenate from (R)-pantoate and beta-alanine: step 1/1. Catalyzes the condensation of pantoate with beta-alanine in an ATP-dependent reaction via a pantoyl-adenylate intermediate. In Pseudothermotoga lettingae (strain ATCC BAA-301 / DSM 14385 / NBRC 107922 / TMO) (Thermotoga lettingae), this protein is Pantothenate synthetase.